A 53-amino-acid chain; its full sequence is Tsetse thrombin inhibitor (53 aa).

Positions M1–P21 are cleaved as a signal peptide.

As to expression, expressed at high levels in salivary glands and midguts of adult tsetse flies.

Its subcellular location is the secreted. Functionally, potent and specific inhibitor of human thrombin. It is also a potent inhibitor of thrombin-induced platelet aggregation. It is capable of antagonizing host hemostasis and facilitating blood feeding. The polypeptide is Tsetse thrombin inhibitor (TTI) (Glossina morsitans morsitans (Savannah tsetse fly)).